We begin with the raw amino-acid sequence, 157 residues long: Serine-protein kinase RsbW (157 aa).

Belongs to the anti-sigma-factor family.

The catalysed reaction is L-seryl-[protein] + ATP = O-phospho-L-seryl-[protein] + ADP + H(+). It catalyses the reaction L-threonyl-[protein] + ATP = O-phospho-L-threonyl-[protein] + ADP + H(+). Functionally, negative regulator of sigma-B activity. Phosphorylates and inactivates its specific antagonist protein, RsbV. Upon phosphorylation of RsbV, RsbW is released and binds to sigma-B, thereby blocking its ability to form an RNA polymerase holoenzyme (E-sigma-B). In Listeria monocytogenes serotype 4b (strain CLIP80459), this protein is Serine-protein kinase RsbW.